The following is a 77-amino-acid chain: Small integral membrane protein 5 (77 aa).

A helical transmembrane segment spans residues 32 to 52 (IVAFSVIILFTATVLLLLLIA).

It is found in the membrane. This chain is Small integral membrane protein 5 (SMIM5), found in Homo sapiens (Human).